Here is a 201-residue protein sequence, read N- to C-terminus: MITNNLVPTVIEKTAGGERAFDIYSRLLKERIVFLNGEVNDHSANLVIAQLLFLESEDPDKDIYFYINSPGGMVTAGMGVYDTMQFIKPDVNTICIGLAASMGSLLLAGGAKGKRYSLPSSQIMIHQPLGGFRGQASDIEIHAKNILRIKDRLNKVLAHHTGQDLETIVRDTDRDNFMMADEAKEYGLIDHVIESREAIIK.

Catalysis depends on serine 101, which acts as the Nucleophile. Histidine 126 is an active-site residue.

This sequence belongs to the peptidase S14 family. In terms of assembly, fourteen ClpP subunits assemble into 2 heptameric rings which stack back to back to give a disk-like structure with a central cavity, resembling the structure of eukaryotic proteasomes.

The protein localises to the cytoplasm. The enzyme catalyses Hydrolysis of proteins to small peptides in the presence of ATP and magnesium. alpha-casein is the usual test substrate. In the absence of ATP, only oligopeptides shorter than five residues are hydrolyzed (such as succinyl-Leu-Tyr-|-NHMec, and Leu-Tyr-Leu-|-Tyr-Trp, in which cleavage of the -Tyr-|-Leu- and -Tyr-|-Trp bonds also occurs).. Its function is as follows. Cleaves peptides in various proteins in a process that requires ATP hydrolysis. Has a chymotrypsin-like activity. Plays a major role in the degradation of misfolded proteins. This Francisella philomiragia subsp. philomiragia (strain ATCC 25017 / CCUG 19701 / FSC 153 / O#319-036) protein is ATP-dependent Clp protease proteolytic subunit.